The following is a 214-amino-acid chain: CRISPR-associated protein Cas5 (214 aa).

The protein belongs to the CRISPR-associated protein Cas5 family.

Functionally, CRISPR (clustered regularly interspaced short palindromic repeat) is an adaptive immune system that provides protection against mobile genetic elements (viruses, transposable elements and conjugative plasmids). CRISPR clusters contain spacers, sequences complementary to antecedent mobile elements, and target invading nucleic acids. CRISPR clusters are transcribed and processed into CRISPR RNA (crRNA). Its function is as follows. Has a role in fruiting body development, sporulation and aggregation. This is CRISPR-associated protein Cas5 (devS) from Myxococcus xanthus (strain DK1622).